Consider the following 247-residue polypeptide: PsbP domain-containing protein 3, chloroplastic (247 aa).

A chloroplast-targeting transit peptide spans 1–26 (MAAISPWLSSPQSFSNPRVTITDSRR). The N-terminal 54 residues, 27 to 80 (CSSISAAISVLDSSNEEQHRISSRDHVGMKRRDVMLQIASSVFFLPLAISPAFA), are a transit peptide targeting the thylakoid.

This sequence belongs to the PsbP family.

The protein localises to the plastid. It is found in the chloroplast thylakoid lumen. The chain is PsbP domain-containing protein 3, chloroplastic (PPD3) from Arabidopsis thaliana (Mouse-ear cress).